A 307-amino-acid chain; its full sequence is Ribonuclease Z (307 aa).

Positions 63, 65, 67, 68, 143, 213, and 271 each coordinate Zn(2+). Asp67 functions as the Proton acceptor in the catalytic mechanism.

This sequence belongs to the RNase Z family. Homodimer. It depends on Zn(2+) as a cofactor.

The enzyme catalyses Endonucleolytic cleavage of RNA, removing extra 3' nucleotides from tRNA precursor, generating 3' termini of tRNAs. A 3'-hydroxy group is left at the tRNA terminus and a 5'-phosphoryl group is left at the trailer molecule.. Functionally, zinc phosphodiesterase, which displays some tRNA 3'-processing endonuclease activity. Probably involved in tRNA maturation, by removing a 3'-trailer from precursor tRNA. The sequence is that of Ribonuclease Z from Lactococcus lactis subsp. lactis (strain IL1403) (Streptococcus lactis).